The chain runs to 649 residues: Epithelial sodium channel subunit gamma (649 aa).

At 1-55 (MAPGEKIKAKIKKNLPVTGPQAPTIKELMRWYCLNTNTHGCRRIVVSRGRLRRLL) the chain is on the cytoplasmic side. The chain crosses the membrane as a helical span at residues 56–76 (WIGFTLTAVALILWQCALLVF). The Extracellular portion of the chain corresponds to 77 to 541 (SFYTVSVSIK…GGQLGLWMSC (465 aa)). 8 cysteine pairs are disulfide-bonded: Cys-100-Cys-283, Cys-207-Cys-214, Cys-260-Cys-267, Cys-372-Cys-457, Cys-394-Cys-453, Cys-398-Cys-449, Cys-407-Cys-434, and Cys-409-Cys-423. The interval 135–221 (RKRREAESWN…SDCATYTFSS (87 aa)) is gating release of inhibition by proteolysis (GRIP); protease-sensitive region that is responsible for the proteolytic activation of the channel. Asn-209 carries an N-linked (GlcNAc...) asparagine glycan. The N-linked (GlcNAc...) asparagine glycan is linked to Asn-497. Residues 542–562 (SVVCVIEIIEVFFIDFFSIIA) traverse the membrane as a helical segment. Residues 563-649 (RRQWQKAKEW…LTDTQMLDEL (87 aa)) are Cytoplasmic-facing. The PY motif; recruits WW domain-containing proteins and is thereby required for ubiquitination and inhibition of the channel by NEDD4 and NEDD4L motif lies at 623 to 627 (PPPKY).

The protein belongs to the amiloride-sensitive sodium channel (TC 1.A.6) family. SCNN1G subfamily. In terms of assembly, component of the heterotrimeric epithelial sodium channel (ENaC) composed of an alpha/SCNN1A, a beta/SCNN1B and a gamma/SCNN1G subunit. An additional delta/SCNN1D subunit can replace the alpha/SCNN1A subunit to form an alternative channel with specific properties. Interacts with WWP1 (via WW domains). Interacts with WWP2 (via WW domains); inhibits the channel. Interacts with the full-length immature form of PCSK9 (pro-PCSK9); inhibits ENaC by promoting its proteasomal degradation. Interacts with BPIFA1; the interaction is indirect via SCNN1B and inhibits the proteolytic maturation of SCNN1A and SCNN1G and the activation of ENaC. In terms of processing, phosphorylated on serine and threonine residues. Aldosterone and insulin increase the basal level of phosphorylation. Post-translationally, ubiquitinated. Can be ubiquitinated at multiple sites and undergo monoubiquitination and polyubiquitination. Ubiquitination by NEDD4 or NEDD4L inhibits the ENaC channel through endocytosis, intracellular retention and degradation of its individual subunits. ENaC is activated through the proteolytic maturation of its subunits. Furin cleaves the SCNN1G subunit first, followed by cleavage by prostasin (PRSS8), which results in a stepwise increase in the open probability of the channel due to the release of an inhibitory tract. BPIFA1, which is recruited by the SCNN1B subunit, prevents the proteolytic activation of ENaC. In terms of processing, N-glycosylated. N-linked glycans are processed to complex type during ENaC complex assembly and transport to the plasma membrane. As to expression, expressed in kidney (at protein level).

The protein localises to the apical cell membrane. It carries out the reaction Na(+)(in) = Na(+)(out). Originally identified and characterized by its inhibition by the diuretic drug amiloride. Its function is as follows. This is one of the three pore-forming subunits of the heterotrimeric epithelial sodium channel (ENaC), a critical regulator of sodium balance and fluid homeostasis. ENaC operates in epithelial tissues, where it mediates the electrodiffusion of sodium ions from extracellular fluid through the apical membrane of cells, with water following osmotically. It plays a key role in maintaining sodium homeostasis through electrogenic sodium reabsorption in the kidneys. Additionally, ENaC is essential for airway surface liquid homeostasis, which is crucial for proper mucus clearance. This chain is Epithelial sodium channel subunit gamma, found in Homo sapiens (Human).